Consider the following 338-residue polypeptide: MKLLITGGCGFLGSNLASFALSQGIDLIVFDNLSRKGATDNLHWLSSLGNFEFVHGDIRNKNDVTRLITKYMPDSCFHLAGQVAMTTSIDNPCMDFEINVGGTLNLLEAVRQYNSNCNIIYSSTNKVYGDLEQYKYNETETRYTCVDKPNGYDESTQLDFHSPYGCSKGAADQYMLDYARIFGLNTVVFRHSSMYGGRQFATYDQGWVGWFCQKAVEIKNGINKPFTISGNGKQVRDVLHAEDMISLYFTALANVSKIRGNAFNIGGTIVNSLSLLELFKLLEDYCNIDMRFTNLPVRESDQRVFVADIKKITNAIDWSPKVSAKDGVQKMYDWTSSI.

Threonine 124 contacts substrate. The active-site Proton acceptor is tyrosine 164.

The protein belongs to the NAD(P)-dependent epimerase/dehydratase family. Homotetramer. It depends on NAD(+) as a cofactor.

The enzyme catalyses CDP-alpha-D-paratose = CDP-3,6-dideoxy-alpha-D-mannose. The protein operates within nucleotide-sugar biosynthesis; CDP-3,6-dideoxy-D-mannose biosynthesis; CDP-3,6-dideoxy-D-mannose from CTP and alpha-D-glucose 1-phosphate: step 5/5. Its function is as follows. Catalyzes the isomeration of CDP-paratose to CDP-tyvelose. The chain is CDP-paratose 2-epimerase (rfbE) from Salmonella typhi.